Reading from the N-terminus, the 257-residue chain is Chlorocatechol 1,2-dioxygenase (257 aa).

Positions 134, 169, 194, and 196 each coordinate Fe cation.

Belongs to the intradiol ring-cleavage dioxygenase family. Requires Fe(3+) as cofactor.

The enzyme catalyses 4-chlorocatechol + O2 = 3-chloro-cis,cis-muconate + 2 H(+). It carries out the reaction 3,5-dichlorocatechol + O2 = (2E,4E)-2,4-dichloromuconate + 2 H(+). This Rhodococcus opacus (Nocardia opaca) protein is Chlorocatechol 1,2-dioxygenase (clcA).